The sequence spans 226 residues: ATP synthase F(0) complex subunit a (226 aa).

Helical transmembrane passes span 5–25, 68–88, 97–117, 136–156, 179–199, and 201–221; these read LFAP…LIII, WSLM…LGML, QLSM…ATGF, FLIP…PVAL, LVLM…LALL, and ILEF…VSLY.

It belongs to the ATPase A chain family. As to quaternary structure, component of the ATP synthase complex composed at least of ATP5F1A/subunit alpha, ATP5F1B/subunit beta, ATP5MC1/subunit c (homooctomer), MT-ATP6/subunit a, MT-ATP8/subunit 8, ATP5ME/subunit e, ATP5MF/subunit f, ATP5MG/subunit g, ATP5MK/subunit k, ATP5MJ/subunit j, ATP5F1C/subunit gamma, ATP5F1D/subunit delta, ATP5F1E/subunit epsilon, ATP5PF/subunit F6, ATP5PB/subunit b, ATP5PD/subunit d, ATP5PO/subunit OSCP. ATP synthase complex consists of a soluble F(1) head domain (subunits alpha(3) and beta(3)) - the catalytic core - and a membrane F(0) domain - the membrane proton channel (subunits c, a, 8, e, f, g, k and j). These two domains are linked by a central stalk (subunits gamma, delta, and epsilon) rotating inside the F1 region and a stationary peripheral stalk (subunits F6, b, d, and OSCP). Interacts with DNAJC30; interaction is direct.

Its subcellular location is the mitochondrion inner membrane. It carries out the reaction H(+)(in) = H(+)(out). Functionally, subunit a, of the mitochondrial membrane ATP synthase complex (F(1)F(0) ATP synthase or Complex V) that produces ATP from ADP in the presence of a proton gradient across the membrane which is generated by electron transport complexes of the respiratory chain. ATP synthase complex consist of a soluble F(1) head domain - the catalytic core - and a membrane F(1) domain - the membrane proton channel. These two domains are linked by a central stalk rotating inside the F(1) region and a stationary peripheral stalk. During catalysis, ATP synthesis in the catalytic domain of F(1) is coupled via a rotary mechanism of the central stalk subunits to proton translocation. With the subunit c (ATP5MC1), forms the proton-conducting channel in the F(0) domain, that contains two crucial half-channels (inlet and outlet) that facilitate proton movement from the mitochondrial intermembrane space (IMS) into the matrix. Protons are taken up via the inlet half-channel and released through the outlet half-channel, following a Grotthuss mechanism. In Balaenoptera musculus (Blue whale), this protein is ATP synthase F(0) complex subunit a.